A 257-amino-acid polypeptide reads, in one-letter code: Type III pantothenate kinase (257 aa).

Residue 6 to 13 coordinates ATP; sequence DVGNTSTK. Substrate is bound at residue 109-112; it reads GADR. Catalysis depends on aspartate 111, which acts as the Proton acceptor. Aspartate 132 serves as a coordination point for K(+). Threonine 135 is an ATP binding site. Residue threonine 187 coordinates substrate.

Belongs to the type III pantothenate kinase family. Homodimer. The cofactor is NH4(+). It depends on K(+) as a cofactor.

It is found in the cytoplasm. The enzyme catalyses (R)-pantothenate + ATP = (R)-4'-phosphopantothenate + ADP + H(+). It functions in the pathway cofactor biosynthesis; coenzyme A biosynthesis; CoA from (R)-pantothenate: step 1/5. Its function is as follows. Catalyzes the phosphorylation of pantothenate (Pan), the first step in CoA biosynthesis. This is Type III pantothenate kinase from Anaplasma marginale (strain Florida).